The primary structure comprises 255 residues: NAD(P)H-quinone oxidoreductase subunit K, chloroplastic (255 aa).

4 residues coordinate [4Fe-4S] cluster: C47, C48, C112, and C143.

The protein belongs to the complex I 20 kDa subunit family. NDH is composed of at least 16 different subunits, 5 of which are encoded in the nucleus. Requires [4Fe-4S] cluster as cofactor.

It is found in the plastid. The protein localises to the chloroplast thylakoid membrane. It carries out the reaction a plastoquinone + NADH + (n+1) H(+)(in) = a plastoquinol + NAD(+) + n H(+)(out). The enzyme catalyses a plastoquinone + NADPH + (n+1) H(+)(in) = a plastoquinol + NADP(+) + n H(+)(out). Its function is as follows. NDH shuttles electrons from NAD(P)H:plastoquinone, via FMN and iron-sulfur (Fe-S) centers, to quinones in the photosynthetic chain and possibly in a chloroplast respiratory chain. The immediate electron acceptor for the enzyme in this species is believed to be plastoquinone. Couples the redox reaction to proton translocation, and thus conserves the redox energy in a proton gradient. The chain is NAD(P)H-quinone oxidoreductase subunit K, chloroplastic from Zygnema circumcarinatum (Green alga).